The sequence spans 139 residues: Trafficking protein particle complex subunit 2-like protein (139 aa).

This sequence belongs to the TRAPP small subunits family. Sedlin subfamily. Component of the multisubunit TRAPP (transport protein particle) complex, which includes at least TRAPPC2, TRAPPC2L, TRAPPC3, TRAPPC3L, TRAPPC4, TRAPPC5, TRAPPC8, TRAPPC9, TRAPPC10, TRAPPC11 and TRAPPC12. Interacts with the heterodimer TRAPPC3-TRAPPC6A.

It localises to the cytoplasm. Its subcellular location is the perinuclear region. The protein resides in the endoplasmic reticulum. It is found in the golgi apparatus. In terms of biological role, may play a role in vesicular transport from endoplasmic reticulum to Golgi. The sequence is that of Trafficking protein particle complex subunit 2-like protein (Trappc2l) from Mus musculus (Mouse).